Consider the following 1018-residue polypeptide: Serine/threonine-protein phosphatase BSL2 (1018 aa).

Residues 1-75 (MDEDSSMVAD…AAAVVGQEQQ (75 aa)) are disordered. Pro residues predominate over residues 41-57 (SPPPEGGSVPTPPPSDP). Residues 63-75 (QQQAAAVVGQEQQ) show a composition bias toward low complexity. 5 Kelch repeats span residues 149–195 (TSAG…VATA), 253–301 (YLMA…TASA), 306–356 (LLLL…VFVN), 362–409 (SGGA…DAAG), and 430–479 (LIFI…RLPG). Positions 569 to 590 (DRDCGAEATPSGKPTFSLIKPD) are disordered. A Phosphoserine modification is found at S627. The Mn(2+) site is built by D720, H722, D754, and N786. Catalysis depends on H787, which acts as the Proton donor. Mn(2+)-binding residues include H839 and H918. A Phosphoserine modification is found at S975. Polar residues predominate over residues 994–1011 (ANRPATPTRGRPQNSNDR). Residues 994–1018 (ANRPATPTRGRPQNSNDRGGSLAWM) form a disordered region.

The protein belongs to the PPP phosphatase family. BSU subfamily. Interacts with BSK8. It depends on Mn(2+) as a cofactor. In terms of tissue distribution, expressed throughout the plant, with a higher level in younger parts.

Its subcellular location is the cytoplasm. It is found in the cell membrane. The protein resides in the nucleus. It catalyses the reaction O-phospho-L-seryl-[protein] + H2O = L-seryl-[protein] + phosphate. It carries out the reaction O-phospho-L-threonyl-[protein] + H2O = L-threonyl-[protein] + phosphate. In terms of biological role, phosphatase involved in elongation process, probably by acting as a regulator of brassinolide signaling. This is Serine/threonine-protein phosphatase BSL2 (BSL2) from Arabidopsis thaliana (Mouse-ear cress).